Consider the following 486-residue polypeptide: HTH-type transcriptional regulator PrpR (486 aa).

Positions 22 to 76 (LRRLRQERGLTQVALAKALDLSTSYVNQLENDQRPITVPVLLLLTERFDLSAQYF) constitute an HTH cro/C1-type domain. The segment at residues 33 to 52 (QVALAKALDLSTSYVNQLEN) is a DNA-binding region (H-T-H motif).

Belongs to the short-chain fatty acyl-CoA assimilation regulator (ScfR) family.

It functions in the pathway organic acid metabolism; propanoate degradation. The protein operates within steroid metabolism; cholesterol metabolism. Plays a key role in regulating expression of enzymes involved in the catabolism of short chain fatty acids (SCFA) via both the glyoxylate (acetyl degradation route) and the methylcitrate cycle (propionate degradation route). Required for intracellular growth in macrophages and for the assimilation of cholesterol-derived propionate. PrpR acts as a transcriptional activator of prpDC and icl genes when propionate is the main carbon source, and as a ramB repressor. During growth on propionate, PrpR also acts as a transcriptional repressor of dnaA, which encodes the DnaA initiator protein responsible for initiating chromosomal replication. It is possibly involved in the regulation of genes responsible for controlling cholesterol utilization. This chain is HTH-type transcriptional regulator PrpR, found in Mycobacterium tuberculosis (strain ATCC 25618 / H37Rv).